The primary structure comprises 67 residues: Bowman-Birk type major trypsin inhibitor (67 aa).

5 disulfide bridges follow: cysteine 8/cysteine 63, cysteine 9/cysteine 24, cysteine 14/cysteine 22, cysteine 31/cysteine 38, and cysteine 35/cysteine 51.

Belongs to the Bowman-Birk serine protease inhibitor family.

The protein is Bowman-Birk type major trypsin inhibitor of Setaria italica (Foxtail millet).